A 392-amino-acid chain; its full sequence is MAVSADYQVKFPESGDLYSILAAEGIEFLLSHSGEVPLEYIHGKTICLFFSAIWCRPCKDFTPELIKLYENLQNRGEELEIIFVSFDHDMTSFYEHFWCMPWLAVPFNLSLLNKLRDKYGISRIPSLVPLYSDEISVAEDVIGLIEDYGSEAFPFTKKRKEELKAIDDSKRLGGQLEKLLTHESRNYVVARNGSKVLVSKLVGKTIGLYFGAHWCPPFRSFTSQLVDVYNELATTDKGSFEVILISTDRDSREFNINMTNMPWLAIPYEDRTRQDLCRIFNVKLIPALVIIGPEEKTVTTNAREMVSLYGSRSFPFTESRIVELKACLKKEGDSLPRKVKDNKHEHELKLDMAKAYVCDFCKKQGRFWAFSCNACDYDLHPTCVEEEEALLV.

Thioredoxin domains are found at residues 17 to 171 (LYSI…DSKR) and 177 to 326 (EKLL…ELKA).

Belongs to the nucleoredoxin family.

The catalysed reaction is [protein]-dithiol + NAD(+) = [protein]-disulfide + NADH + H(+). It carries out the reaction [protein]-dithiol + NADP(+) = [protein]-disulfide + NADPH + H(+). Functionally, probable thiol-disulfide oxidoreductase that may participate in various redox reactions. This is Probable nucleoredoxin 3 from Arabidopsis thaliana (Mouse-ear cress).